Reading from the N-terminus, the 763-residue chain is Cadherin-like protein 26 (763 aa).

Positions 1-20 (MDTRGCAWLLLLLSLPQGQS) are cleaved as a signal peptide. Cadherin domains lie at 21-140 (HQPL…APQF), 141-250 (PEKE…MPTF), 251-371 (MEDR…PPAF), and 370-478 (AFHP…APTL). Residues 21–590 (HQPLHRSKRR…SECEEPSDTW (570 aa)) are Extracellular-facing. N-linked (GlcNAc...) asparagine glycosylation is found at Asn-56, Asn-60, and Asn-146. 2 N-linked (GlcNAc...) asparagine glycosylation sites follow: Asn-394 and Asn-440. A helical transmembrane segment spans residues 591 to 611 (LLWWALSPVGAALMVLSAALL). At 612–763 (CLLRCSCTFG…AMCFTSRVPS (152 aa)) the chain is on the cytoplasmic side.

Homodimer. Component of a cadherin:catenin adhesion complex composed of at least of CDH26, beta-catenin/CTNNB1, alpha-catenin/CTNNA1 and p120 catenin/CTNND1. N-glycosylated.

Its subcellular location is the cell membrane. Its function is as follows. Cadherins are calcium-dependent cell adhesion proteins. They preferentially interact with themselves in a homophilic manner in connecting cells; cadherins may thus contribute to the sorting of heterogeneous cell types. Ligand for integrins alpha-E/beta-7, ITGAE:ITGAB7, alpha-4/beta-7, ITGA4:ITGAB7 and alpha-4/beta-1, ITGA4:ITGAB1 through which modulates CD4(+) T cells activation. In Mus musculus (Mouse), this protein is Cadherin-like protein 26 (Cdh26).